A 220-amino-acid chain; its full sequence is Iron-sulfur cluster repair protein YtfE (220 aa).

It belongs to the RIC family. YtfE subfamily. In terms of assembly, homodimer.

The protein localises to the cytoplasm. Di-iron-containing protein involved in the repair of iron-sulfur clusters damaged by oxidative and nitrosative stress conditions. This chain is Iron-sulfur cluster repair protein YtfE, found in Salmonella schwarzengrund (strain CVM19633).